A 375-amino-acid polypeptide reads, in one-letter code: MKAILALEDGTLFHGHTFTGEGSAGGEVIFNTGMTGYQEVLTDPSYTGQMVCMTYPHVGNYGINPEDIESAHIRVAGFIVKECCKEPSNWRSTMTLPEYLTSQGITGIEGIDTRALTRHLRLHGAMRGYISTDVSDPQRVVGLAKGLPSMEGLGLADRVCCDAPFTWSGTAMEPAKIVDGTYAWPGTGPRLVVFDMGIKWNILRLLTAQGFDMLVVPYTTTAEQVRKLGPDAVFLSPGPGDPAALTDLVHTTSLLVNEYPLAGICLGHQLLGLALGGRTFKLKFGHHGLNHPVKDLQTGRIEISSQNHGFCVDIESLSDVELTHVNLNDNTLEGFAHKKKPVIAIQYHPEAAPGPHDSRYFFSRFRNLVRKETGK.

Residues 1–186 are CPSase; that stretch reads MKAILALEDG…IVDGTYAWPG (186 aa). Positions 45, 238, and 240 each coordinate L-glutamine. The Glutamine amidotransferase type-1 domain maps to 190–375; it reads RLVVFDMGIK…RNLVRKETGK (186 aa). The active-site Nucleophile is cysteine 265. 5 residues coordinate L-glutamine: leucine 266, glutamine 269, asparagine 307, glycine 309, and phenylalanine 310. Active-site residues include histidine 348 and glutamate 350.

This sequence belongs to the CarA family. Composed of two chains; the small (or glutamine) chain promotes the hydrolysis of glutamine to ammonia, which is used by the large (or ammonia) chain to synthesize carbamoyl phosphate. Tetramer of heterodimers (alpha,beta)4.

The catalysed reaction is hydrogencarbonate + L-glutamine + 2 ATP + H2O = carbamoyl phosphate + L-glutamate + 2 ADP + phosphate + 2 H(+). The enzyme catalyses L-glutamine + H2O = L-glutamate + NH4(+). It functions in the pathway amino-acid biosynthesis; L-arginine biosynthesis; carbamoyl phosphate from bicarbonate: step 1/1. The protein operates within pyrimidine metabolism; UMP biosynthesis via de novo pathway; (S)-dihydroorotate from bicarbonate: step 1/3. Functionally, small subunit of the glutamine-dependent carbamoyl phosphate synthetase (CPSase). CPSase catalyzes the formation of carbamoyl phosphate from the ammonia moiety of glutamine, carbonate, and phosphate donated by ATP, constituting the first step of 2 biosynthetic pathways, one leading to arginine and/or urea and the other to pyrimidine nucleotides. The small subunit (glutamine amidotransferase) binds and cleaves glutamine to supply the large subunit with the substrate ammonia. The chain is Carbamoyl phosphate synthase small chain from Solidesulfovibrio magneticus (strain ATCC 700980 / DSM 13731 / RS-1) (Desulfovibrio magneticus).